Here is a 263-residue protein sequence, read N- to C-terminus: Phosphatidylglycerol--prolipoprotein diacylglyceryl transferase (263 aa).

Transmembrane regions (helical) follow at residues 7-27 (IFSI…LGIV), 50-70 (LLTA…VLIY), 85-105 (TWKG…AVII), and 112-132 (IPIF…LFLG). R133 lines the a 1,2-diacyl-sn-glycero-3-phospho-(1'-sn-glycerol) pocket. A run of 3 helical transmembrane segments spans residues 169-189 (LYEA…LFFL), 197-217 (GTLT…VEFF), and 233-253 (MGQL…LSAL).

This sequence belongs to the Lgt family.

The protein resides in the cell membrane. The enzyme catalyses L-cysteinyl-[prolipoprotein] + a 1,2-diacyl-sn-glycero-3-phospho-(1'-sn-glycerol) = an S-1,2-diacyl-sn-glyceryl-L-cysteinyl-[prolipoprotein] + sn-glycerol 1-phosphate + H(+). The protein operates within protein modification; lipoprotein biosynthesis (diacylglyceryl transfer). In terms of biological role, catalyzes the transfer of the diacylglyceryl group from phosphatidylglycerol to the sulfhydryl group of the N-terminal cysteine of a prolipoprotein, the first step in the formation of mature lipoproteins. The sequence is that of Phosphatidylglycerol--prolipoprotein diacylglyceryl transferase from Wolbachia sp. subsp. Brugia malayi (strain TRS).